The sequence spans 559 residues: 5'-AMP-activated protein kinase catalytic subunit alpha-1 (559 aa).

Residues 27 to 279 (YILGDTLGVG…IKDIREHEWF (253 aa)) enclose the Protein kinase domain. Thr32 carries the post-translational modification Phosphothreonine. ATP contacts are provided by residues 33-41 (LGVGTFGKV) and Lys56. Asp150 functions as the Proton acceptor in the catalytic mechanism. Thr183 carries the phosphothreonine; by LKB1 and CaMKK2 modification. Phosphothreonine occurs at positions 269 and 355. The segment at 302–381 (EALKEVCEKF…PERVPFLVAE (80 aa)) is AIS. Phosphoserine is present on Ser356. Ser360 bears the Phosphoserine; by ULK1 mark. Thr368 carries the phosphothreonine; by ULK1 modification. Thr382 is subject to Phosphothreonine. Position 397 is a phosphoserine; by ULK1 (Ser397). Phosphoserine occurs at positions 467 and 486. Residues 484–536 (AKSGTATPQRSGSISNYRSCQRSDSDAEAQGKPSEVSLTSSVTSLDSSPVDVA) are disordered. The segment covering 485 to 505 (KSGTATPQRSGSISNYRSCQR) has biased composition (polar residues). Ser486 is subject to Phosphoserine; by ULK1. At Thr488 the chain carries Phosphothreonine; by ULK1. Thr490 bears the Phosphothreonine mark. A phosphoserine mark is found at Ser496, Ser508, Ser524, and Ser527. Low complexity predominate over residues 516–535 (PSEVSLTSSVTSLDSSPVDV).

It belongs to the protein kinase superfamily. CAMK Ser/Thr protein kinase family. SNF1 subfamily. AMPK is a heterotrimer of an alpha catalytic subunit (PRKAA1 or PRKAA2), a beta (PRKAB1 or PRKAB2) and a gamma non-catalytic subunits (PRKAG1, PRKAG2 or PRKAG3). Interacts with FNIP1 and FNIP2. Mg(2+) is required as a cofactor. Post-translationally, ubiquitinated. In terms of processing, phosphorylated at Thr-183 by STK11/LKB1 in complex with STE20-related adapter-alpha (STRADA) pseudo kinase and CAB39. Also phosphorylated at Thr-183 by CAMKK2; triggered by a rise in intracellular calcium ions, without detectable changes in the AMP/ATP ratio. CAMKK1 can also phosphorylate Thr-183, but at a much lower level. Dephosphorylated by protein phosphatase 2A and 2C (PP2A and PP2C). Phosphorylated by ULK1 and ULK2; leading to negatively regulate AMPK activity and suggesting the existence of a regulatory feedback loop between ULK1, ULK2 and AMPK. There is some ambiguity for some phosphosites: Ser-360/Thr-368 and Ser-486/Thr-488. Dephosphorylated by PPM1A and PPM1B. Glycosylated; O-GlcNAcylated by OGT, promoting the AMP-activated protein kinase (AMPK) activity. As to expression, low expression in kidney, liver, lung, heart and brain.

It localises to the cytoplasm. Its subcellular location is the nucleus. It carries out the reaction L-seryl-[protein] + ATP = O-phospho-L-seryl-[protein] + ADP + H(+). The catalysed reaction is L-threonyl-[protein] + ATP = O-phospho-L-threonyl-[protein] + ADP + H(+). It catalyses the reaction L-seryl-[acetyl-CoA carboxylase] + ATP = O-phospho-L-seryl-[acetyl-CoA carboxylase] + ADP + H(+). The enzyme catalyses L-seryl-[3-hydroxy-3-methylglutaryl-coenzyme A reductase] + ATP = O-phospho-L-seryl-[3-hydroxy-3-methylglutaryl-coenzyme A reductase] + ADP + H(+). It carries out the reaction L-seryl-[tau protein] + ATP = O-phospho-L-seryl-[tau protein] + ADP + H(+). The catalysed reaction is L-threonyl-[tau protein] + ATP = O-phospho-L-threonyl-[tau protein] + ADP + H(+). With respect to regulation, activated by phosphorylation on Thr-183. Binding of AMP to non-catalytic gamma subunit (PRKAG1, PRKAG2 or PRKAG3) results in allosteric activation, inducing phosphorylation on Thr-183. AMP-binding to gamma subunit also sustains activity by preventing dephosphorylation of Thr-183. ADP also stimulates Thr-183 phosphorylation, without stimulating already phosphorylated AMPK. ATP promotes dephosphorylation of Thr-183, rendering the enzyme inactive. Under physiological conditions AMPK mainly exists in its inactive form in complex with ATP, which is much more abundant than AMP. Selectively inhibited by compound C (6-[4-(2-Piperidin-1-yl-ethoxy)-phenyl)]-3-pyridin-4-yl-pyyrazolo[1,5-a] pyrimidine. Activated by resveratrol, a natural polyphenol present in red wine, and S17834, a synthetic polyphenol. Catalytic subunit of AMP-activated protein kinase (AMPK), an energy sensor protein kinase that plays a key role in regulating cellular energy metabolism. In response to reduction of intracellular ATP levels, AMPK activates energy-producing pathways and inhibits energy-consuming processes: inhibits protein, carbohydrate and lipid biosynthesis, as well as cell growth and proliferation. AMPK acts via direct phosphorylation of metabolic enzymes, and by longer-term effects via phosphorylation of transcription regulators. Regulates lipid synthesis by phosphorylating and inactivating lipid metabolic enzymes such as ACACA, ACACB, GYS1, HMGCR and LIPE; regulates fatty acid and cholesterol synthesis by phosphorylating acetyl-CoA carboxylase (ACACA and ACACB) and hormone-sensitive lipase (LIPE) enzymes, respectively. Promotes lipolysis of lipid droplets by mediating phosphorylation of isoform 1 of CHKA (CHKalpha2). Regulates insulin-signaling and glycolysis by phosphorylating IRS1, PFKFB2 and PFKFB3. AMPK stimulates glucose uptake in muscle by increasing the translocation of the glucose transporter SLC2A4/GLUT4 to the plasma membrane, possibly by mediating phosphorylation of TBC1D4/AS160. Regulates transcription and chromatin structure by phosphorylating transcription regulators involved in energy metabolism such as CRTC2/TORC2, FOXO3, histone H2B, HDAC5, MEF2C, MLXIPL/ChREBP, EP300, HNF4A, p53/TP53, SREBF1, SREBF2 and PPARGC1A. Acts as a key regulator of glucose homeostasis in liver by phosphorylating CRTC2/TORC2, leading to CRTC2/TORC2 sequestration in the cytoplasm. In response to stress, phosphorylates 'Ser-36' of histone H2B (H2BS36ph), leading to promote transcription. Acts as a key regulator of cell growth and proliferation by phosphorylating FNIP1, TSC2, RPTOR, WDR24 and ATG1/ULK1: in response to nutrient limitation, negatively regulates the mTORC1 complex by phosphorylating RPTOR component of the mTORC1 complex and by phosphorylating and activating TSC2. Also phosphorylates and inhibits GATOR2 subunit WDR24 in response to nutrient limitation, leading to suppress glucose-mediated mTORC1 activation. In response to energetic stress, phosphorylates FNIP1, inactivating the non-canonical mTORC1 signaling, thereby promoting nuclear translocation of TFEB and TFE3, and inducing transcription of lysosomal or autophagy genes. In response to nutrient limitation, promotes autophagy by phosphorylating and activating ATG1/ULK1. In that process, it also activates WDR45/WIPI4. Phosphorylates CASP6, thereby preventing its autoprocessing and subsequent activation. In response to nutrient limitation, phosphorylates transcription factor FOXO3 promoting FOXO3 mitochondrial import. Also acts as a regulator of cellular polarity by remodeling the actin cytoskeleton; probably by indirectly activating myosin. AMPK also acts as a regulator of circadian rhythm by mediating phosphorylation of CRY1, leading to destabilize it. May regulate the Wnt signaling pathway by phosphorylating CTNNB1, leading to stabilize it. Also has tau-protein kinase activity: in response to amyloid beta A4 protein (APP) exposure, activated by CAMKK2, leading to phosphorylation of MAPT/TAU; however the relevance of such data remains unclear in vivo. Also phosphorylates CFTR, EEF2K, KLC1, NOS3 and SLC12A1. Regulates hepatic lipogenesis. Activated via SIRT3, represses sterol regulatory element-binding protein (SREBP) transcriptional activities and ATP-consuming lipogenesis to restore cellular energy balance. Upon stress, regulates mitochondrial fragmentation through phosphorylation of MTFR1L. The chain is 5'-AMP-activated protein kinase catalytic subunit alpha-1 (Prkaa1) from Rattus norvegicus (Rat).